Consider the following 394-residue polypeptide: 12-oxophytodienoate reductase 7 (394 aa).

Residues P35 to T37 and Q110 contribute to the FMN site. Substrate is bound at residue H189–H192. Y194 acts as the Proton donor in catalysis. R241 contributes to the FMN binding site. R286 is a substrate binding site. Residues G324 and G345–R346 each bind FMN. Positions S392–M394 match the Microbody targeting signal motif.

Belongs to the NADH:flavin oxidoreductase/NADH oxidase family. FMN serves as cofactor.

It is found in the peroxisome. The enzyme catalyses (1S,2S)-OPC-8 + NADP(+) = (9S,13S,15Z)-12-oxophyto-10,15-dienoate + NADPH + H(+). The protein operates within lipid metabolism; oxylipin biosynthesis. In terms of biological role, involved in the biosynthesis of jasmonate (JA) and perhaps in biosynthesis or metabolism of other oxylipin signaling moleclules. In vitro, reduces cis(+)-12-oxophytodienoic acid (cis(+)-OPDA) and cis(-)-OPDA to cis(+)-OPC-8:0 and cis(-)-OPC-8:0, respectively. May be required for the spatial and temporal regulation of JA levels during dehiscence of anthers, promoting the stomium degeneration program. Involved in carbohydrate transport underlying normal lodicule function during anthesis. The protein is 12-oxophytodienoate reductase 7 of Oryza sativa subsp. japonica (Rice).